Consider the following 118-residue polypeptide: Putative pterin-4-alpha-carbinolamine dehydratase (118 aa).

It belongs to the pterin-4-alpha-carbinolamine dehydratase family.

It catalyses the reaction (4aS,6R)-4a-hydroxy-L-erythro-5,6,7,8-tetrahydrobiopterin = (6R)-L-erythro-6,7-dihydrobiopterin + H2O. This is Putative pterin-4-alpha-carbinolamine dehydratase from Pseudomonas aeruginosa (strain LESB58).